Consider the following 130-residue polypeptide: Small ribosomal subunit protein uS9 (130 aa).

The tract at residues 98 to 130 (LKRAGMLTRDPRMKERKKPGLKGARRSPQFSKR) is disordered. Residues 111–130 (KERKKPGLKGARRSPQFSKR) show a composition bias toward basic residues.

Belongs to the universal ribosomal protein uS9 family.

The chain is Small ribosomal subunit protein uS9 from Macrococcus caseolyticus (strain JCSC5402) (Macrococcoides caseolyticum).